Consider the following 727-residue polypeptide: Cyclin-T1 (727 aa).

Phosphoserine is present on Ser-117. Residues 253 to 270 (KRIWNWRAWQADRKTKAD) carry the Nuclear localization signal motif. Lys-343 participates in a covalent cross-link: Glycyl lysine isopeptide (Lys-Gly) (interchain with G-Cter in SUMO2). Ser-389 carries the phosphoserine modification. Residues 389–420 (SLKEYRAKHAEELAAQKRQLENMEANVKSQYA) adopt a coiled-coil conformation. Lys-391 carries the N6-acetyllysine modification. Lys-416 participates in a covalent cross-link: Glycyl lysine isopeptide (Lys-Gly) (interchain with G-Cter in SUMO2). ADP-ribosylserine is present on residues Ser-417 and Ser-475. The segment at 481–551 (IKMRIKVHTA…RLGDPKHSSQ (71 aa)) is histidine-rich domain (HRD). Lys-482 is covalently cross-linked (Glycyl lysine isopeptide (Lys-Gly) (interchain with G-Cter in SUMO2)). Lys-486 bears the N6-(ADP-ribosyl)lysine mark. The span at 487–507 (VHTAADKHNSVDDSVTKNREH) shows a compositional bias: basic and acidic residues. Disordered regions lie at residues 487–631 (VHTA…QPSC) and 691–727 (YMNPRAGGMSSRSGNTDKPRPPPLPSEPPPPLPPLPK). ADP-ribosylhistidine is present on His-488. 2 positions are modified to phosphoserine: Ser-496 and Ser-500. Basic residues predominate over residues 508-531 (KEKHKTHPSNHHHHHNHHSHKHSH). His-531 is modified (ADP-ribosylhistidine). ADP-ribosylserine is present on residues Ser-532, Ser-550, and Ser-553. His-557 bears the ADP-ribosylhistidine mark. The segment covering 561–571 (SLSSSFSSSSS) has biased composition (low complexity). Ser-564 bears the ADP-ribosylserine mark. Residue Ser-565 is modified to Phosphoserine. A compositionally biased stretch (polar residues) spans 616 to 631 (GHSSDTSGLHFSQPSC). A compositionally biased stretch (pro residues) spans 711-727 (PPPLPSEPPPPLPPLPK).

It belongs to the cyclin family. Cyclin C subfamily. In terms of assembly, cyclin-T1 is the predominant cyclin that associates with CDK9 to form a heterodimer called P-TEFb. P-TEFb forms a complex with AFF4/AF5Q31. Component of a complex which is at least composed of HTATSF1/Tat-SF1, P-TEFb complex, RNA pol II, SUPT5H, and NCL/nucleolin. Component of the 7SK snRNP complex at least composed of P-TEFb (composed of CDK9 and CCNT1/cyclin-T1), HEXIM1, HEXIM2, BCDIN3, SART3 proteins and 7SK and U6 snRNAs. Interacts (via central region) with ZMYND8 (via N-terminus); the interaction is direct and the association appears to occur between homodimeric ZMYND8 and the activated form of the P-TEFb complex. Interacts with BRD4, targets chromatin binding. Interacts with JMJD6. Interacts with MDFIC. Interacts with HSF1. Interacts with HTATSF1. Interacts with TBX21. As to quaternary structure, (Microbial infection) Binds to BIV Tat, however Tat binds TAR RNA in a Cyc-T1-independent mode. ADP-ribosylation on serine residues by PARP1 in response to DNA damage disrupts the phase separation activity of CCNT1, thereby preventing activation of CDK9.

It is found in the nucleus. Regulatory subunit of the cyclin-dependent kinase pair (CDK9/cyclin-T1) complex, also called positive transcription elongation factor B (P-TEFb), which facilitates the transition from abortive to productive elongation by phosphorylating the CTD (C-terminal domain) of the large subunit of RNA polymerase II (RNA Pol II). Required to activate the protein kinase activity of CDK9: acts by mediating formation of liquid-liquid phase separation (LLPS) that enhances binding of P-TEFb to the CTD of RNA Pol II. The chain is Cyclin-T1 (CCNT1) from Bos taurus (Bovine).